The chain runs to 37 residues: Large ribosomal subunit protein bL36 (37 aa).

It belongs to the bacterial ribosomal protein bL36 family.

In Borreliella afzelii (strain PKo) (Borrelia afzelii), this protein is Large ribosomal subunit protein bL36.